A 146-amino-acid chain; its full sequence is Hemoglobin subunit beta-1 (146 aa).

A Globin domain is found at Glu2 to Phe146. 2 residues coordinate heme b: His63 and His92.

It belongs to the globin family. As to quaternary structure, heterotetramer of two alpha chains and two beta chains. As to expression, red blood cells.

Involved in oxygen transport from gills to the various peripheral tissues. The chain is Hemoglobin subunit beta-1 (hbb1) from Muraena helena (Mediterranean moray).